The primary structure comprises 5654 residues: Mucin-5AC (5654 aa).

The N-terminal stretch at Met-1–Ala-27 is a signal peptide. The interval Ala-27–Pro-49 is disordered. Residues Arg-79–Gln-249 enclose the VWFD 1 domain. 2 cysteine pairs are disulfide-bonded: Cys-81–Cys-211 and Cys-103–Cys-248. Glu-198 serves as a coordination point for Cu(2+). N-linked (GlcNAc...) asparagine glycans are attached at residues Asn-205 and Asn-258. 2 residues coordinate Cu(2+): His-320 and His-367. A TIL 1 domain is found at Cys-338–Cys-394. The region spanning Cys-394–Asp-465 is the VWFC 1 domain. N-linked (GlcNAc...) asparagine glycosylation is present at Asn-415. The 176-residue stretch at Gly-432–Pro-607 folds into the VWFD 2 domain. Intrachain disulfides connect Cys-434/Cys-571, Cys-456/Cys-606, and Cys-478/Cys-486. Residue Asn-524 is glycosylated (N-linked (GlcNAc...) asparagine). 2 consecutive TIL domains span residues Cys-704–Cys-761 and Asp-818–Cys-863. Positions Ala-901 to Pro-1072 constitute a VWFD 3 domain. Cystine bridges form between Cys-903–Cys-1036, Cys-925–Cys-1071, Cys-934–Cys-1033, and Cys-953–Cys-960. Asn-1308 carries an N-linked (GlcNAc...) asparagine glycan. The tract at residues Leu-1336–Ala-1377 is disordered. Residues Val-1338–Ala-1377 show a composition bias toward polar residues. A Cys-rich subdomain 1 repeat occupies Cys-1383–Cys-1481. The interval Cys-1383–Cys-4731 is 9 X Cys-rich subdomain repeats. Trp-1389 carries a C-linked (Man) tryptophan glycan. Composition is skewed to low complexity over residues Thr-1483 to Thr-1539 and Ala-1547 to Ser-1575. Residues Thr-1483–Ser-1575 form a disordered region. One copy of the Cys-rich subdomain 2 repeat lies at Cys-1577–Cys-1677. Trp-1584 carries a C-linked (Man) tryptophan glycan. Residues Ala-1688–Gly-1733 are disordered. Over residues Thr-1697 to Thr-1707 the composition is skewed to low complexity. Polar residues predominate over residues His-1708–Gly-1733. The stretch at Cys-1743–Cys-1847 is one Cys-rich subdomain 3 repeat. A C-linked (Man) tryptophan glycan is attached at Trp-1749. Residues Met-1849 to Ser-1948 are disordered. Low complexity-rich tracts occupy residues Thr-1850–Thr-1912 and Ala-1920–Ser-1948. One copy of the Cys-rich subdomain 4 repeat lies at Cys-1950–Cys-2050. C-linked (Man) tryptophan glycosylation is present at Trp-1957. Residues Thr-2059–Thr-2110 are disordered. Positions Thr-2070–Thr-2080 are enriched in low complexity. Positions His-2081 to Thr-2110 are enriched in polar residues. Residues Cys-2116–Cys-2220 form a Cys-rich subdomain 5 repeat. Trp-2122 carries C-linked (Man) tryptophan glycosylation. The span at Ser-2224 to Ser-2234 shows a compositional bias: low complexity. The segment at Ser-2224–His-3214 is disordered. Residues Gly-2235–Lys-2249 are compositionally biased toward polar residues. 2 stretches are compositionally biased toward low complexity: residues Ser-2250 to Pro-3184 and Pro-3192 to His-3214. The tract at residues Thr-2257 to Ser-3200 is 107 X 8 AA approximate tandem repeats of T-T-S-T-T-S-A-P. O-linked (GalNAc) threonine glycans are attached at residues Thr-2395, Thr-2405, Thr-2451, Thr-2461, Thr-2531, Thr-2541, Thr-2571, Thr-2581, Thr-2699, Thr-2709, Thr-2883, Thr-2893, Thr-2979, Thr-2989, Thr-3067, and Thr-3077. One copy of the Cys-rich subdomain 6 repeat lies at Cys-3222–Cys-3326. Trp-3228 is a glycosylation site (C-linked (Man) tryptophan). The segment covering Thr-3329 to Ser-3340 has biased composition (low complexity). Residues Thr-3329–Pro-3515 form a disordered region. A compositionally biased stretch (polar residues) spans Gly-3341 to Lys-3355. Over residues Ser-3356–Ser-3513 the composition is skewed to low complexity. Residues Thr-3363–Ser-3498 are 17 X 8 AA approximate tandem repeats of T-T-S-T-T-S-A-P. The Cys-rich subdomain 7 repeat unit spans residues Cys-3520–Val-3660. A glycan (C-linked (Man) tryptophan) is linked at Trp-3526. Low complexity predominate over residues Ser-3628–Ser-3638. Residues Ser-3628–Arg-3951 are disordered. Positions Gly-3639 to Val-3660 are enriched in polar residues. The 34 X 8 AA approximate tandem repeats of T-T-S-T-T-S-A-P stretch occupies residues Thr-3661–Ser-3931. The segment covering Thr-3661–Ser-3946 has biased composition (low complexity). An N-linked (GlcNAc...) asparagine glycan is attached at Asn-3774. A Cys-rich subdomain 8 repeat occupies Cys-3953 to Cys-4057. Trp-3959 carries a C-linked (Man) tryptophan glycan. Low complexity predominate over residues Thr-4060–Ser-4071. Positions Thr-4060 to Ser-4625 are disordered. Polar residues predominate over residues Gly-4072 to Arg-4088. Low complexity predominate over residues Thr-4089–Ser-4610. The segment at Val-4093–Pro-4595 is 58 X 8 AA approximate tandem repeats of T-T-S-T-T-S-A-P. Thr-4224, Thr-4234, Thr-4296, Thr-4306, Thr-4320, Thr-4330, Thr-4376, Thr-4386, Thr-4440, Thr-4450, Thr-4480, Thr-4490, Thr-4512, Thr-4522, Thr-4568, and Thr-4578 each carry an O-linked (GalNAc) threonine glycan. Polar residues predominate over residues His-4611–Thr-4624. One copy of the Cys-rich subdomain 9 repeat lies at Cys-4627–Cys-4731. C-linked (Man) tryptophan glycosylation occurs at Trp-4633. The segment at Thr-4830–Glu-4849 is disordered. The region spanning Cys-4852–Gln-4918 is the VWFC 2 domain. Residues Asn-4869 and Asn-4942 are each glycosylated (N-linked (GlcNAc...) asparagine). The region spanning Cys-4919–His-5103 is the VWFD 4 domain. 3 disulfides stabilise this stretch: Cys-4921/Cys-5063, Cys-4943/Cys-5102, and Cys-4967/Cys-4975. N-linked (GlcNAc...) asparagine glycosylation is found at Asn-5057, Asn-5093, and Asn-5236. A VWFC 3 domain is found at Pro-5276–Ala-5345. N-linked (GlcNAc...) asparagine glycosylation is found at Asn-5347, Asn-5377, Asn-5386, Asn-5455, and Asn-5528. The 68-residue stretch at Thr-5381–Val-5448 folds into the VWFC 4 domain. 4 disulfides stabilise this stretch: Cys-5532/Cys-5582, Cys-5546/Cys-5596, Cys-5557/Cys-5612, and Cys-5561/Cys-5614. The region spanning Cys-5532–Pro-5620 is the CTCK domain. An N-linked (GlcNAc...) asparagine glycan is attached at Asn-5591. Positions Pro-5622–His-5654 are disordered.

As to quaternary structure, homomultimer; disulfide-linked. The N- and C-terminus mediate their assembly into higher order structures to form filaments. The CTCK domains of two polypeptides associate in the endoplasmic reticulum to generate intermolecularly disulfide-bonded dimers. These dimers progress to the Golgi apparatus, which is a more acidic environment than the endoplasmic reticulum. Under acidic conditions, the N-termini form non-covalent intermolecular interactions that juxtapose assemblies from different CTCK-linked dimers to produce long, disulfide-linked polymers that remain highly compact until secretion. Post-translationally, C-, O- and N-glycosylated. O-glycosylated on the second and last Thr of the Thr-/Ser-rich tandem repeats TTPSPVPTTSTTSA. One form of glycosylation is also known as Lewis B (LeB) blood group antigen, a tetrasaccharide consisting of N-acetylglucosamine having a fucosyl residue attached. It has a role as an epitope and antigen and functions as a receptor for H.pylori binding and facilitates infection. C-mannosylation in the Cys-rich subdomains may be required for proper folding of these regions and for export from the endoplasmic reticulum during biosynthesis. In terms of processing, proteolytic cleavage in the C-terminal is initiated early in the secretory pathway and does not involve a serine protease. The extent of cleavage is increased in the acidic parts of the secretory pathway. Cleavage generates a reactive group which could link the protein to a primary amide. As to expression, highly expressed in surface mucosal cells of respiratory tract and stomach epithelia. Overexpressed in a number of carcinomas. Also expressed in Barrett's esophagus epithelium and in the proximal duodenum.

It is found in the secreted. Its function is as follows. Gel-forming glycoprotein of gastric and respiratory tract epithelia that protects the mucosa from infection and chemical damage by binding to inhaled microorganisms and particles that are subsequently removed by the mucociliary system. Interacts with H.pylori in the gastric epithelium, Barrett's esophagus as well as in gastric metaplasia of the duodenum (GMD). This is Mucin-5AC from Homo sapiens (Human).